A 189-amino-acid chain; its full sequence is NADH-quinone oxidoreductase subunit B (189 aa).

Cys-39, Cys-40, Cys-104, and Cys-135 together coordinate [4Fe-4S] cluster.

This sequence belongs to the complex I 20 kDa subunit family. As to quaternary structure, NDH-1 is composed of 14 different subunits. Subunits NuoB, C, D, E, F, and G constitute the peripheral sector of the complex. [4Fe-4S] cluster is required as a cofactor.

It localises to the cell inner membrane. It carries out the reaction a quinone + NADH + 5 H(+)(in) = a quinol + NAD(+) + 4 H(+)(out). NDH-1 shuttles electrons from NADH, via FMN and iron-sulfur (Fe-S) centers, to quinones in the respiratory chain. The immediate electron acceptor for the enzyme in this species is believed to be a menaquinone. Couples the redox reaction to proton translocation (for every two electrons transferred, four hydrogen ions are translocated across the cytoplasmic membrane), and thus conserves the redox energy in a proton gradient. The sequence is that of NADH-quinone oxidoreductase subunit B from Chlorobium limicola (strain DSM 245 / NBRC 103803 / 6330).